A 125-amino-acid chain; its full sequence is Large ribosomal subunit protein bL17 (125 aa).

Belongs to the bacterial ribosomal protein bL17 family. In terms of assembly, part of the 50S ribosomal subunit. Contacts protein L32.

In Blochmanniella pennsylvanica (strain BPEN), this protein is Large ribosomal subunit protein bL17.